Here is a 230-residue protein sequence, read N- to C-terminus: MSQRAPIVTIDGPSGAGKGTISQILASRLGWKLLDSGAIYRVLALAAIHHNVELDNEASLALLAAHLDVQFITANGNGIKVVLEGEDVSHAIRSQECSNAASKVAAFPRVREALLRRQRAFAEAPGLIADGRDMGTVVFPTSPAKLYLTASAEERAQRRYNQLQDKGFDVNIDRLLAEVVERDERDMNRPVAPLVPAEDALVIDTTGIGIDEVVELALSHIKEKLPDLVL.

An ATP-binding site is contributed by 12–20 (GPSGAGKGT).

It belongs to the cytidylate kinase family. Type 1 subfamily.

The protein resides in the cytoplasm. The catalysed reaction is CMP + ATP = CDP + ADP. The enzyme catalyses dCMP + ATP = dCDP + ADP. This Shewanella loihica (strain ATCC BAA-1088 / PV-4) protein is Cytidylate kinase.